A 137-amino-acid chain; its full sequence is Outer membrane protein assembly factor BamE (137 aa).

Residues 1-18 (MQVKTLLGATFLALSLAS) form the signal peptide. The N-palmitoyl cysteine moiety is linked to residue Cys19. Cys19 carries S-diacylglycerol cysteine lipidation.

The protein belongs to the BamE family. In terms of assembly, part of the Bam complex.

It is found in the cell outer membrane. Part of the outer membrane protein assembly complex, which is involved in assembly and insertion of beta-barrel proteins into the outer membrane. The sequence is that of Outer membrane protein assembly factor BamE from Haemophilus influenzae (strain ATCC 51907 / DSM 11121 / KW20 / Rd).